The primary structure comprises 585 residues: Potassium-transporting ATPase potassium-binding subunit (585 aa).

12 consecutive transmembrane segments (helical) span residues 25–45, 84–104, 152–172, 194–214, 275–295, 307–327, 345–365, 368–388, 397–417, 437–457, 502–522, and 547–567; these read IIIFIYLGITSIFSYVLSFYI, YFINLLLFNFFAGLISFLVIM, FVITGLMFLSAGTGFAASMAF, IFDLILPLSILVTIILILAGV, LEFVSFTIIPLGSLMALGIVF, VIMFFFVFDGLFAFFGEYVGV, AIGVSQSSIFAVGATLTSTGA, GALVSYTPAGIIGVLIGLLLN, GVLNIFMYIIFTVFIGSLMVG, LSLVTHPLLVVIPLGITLMIP, LDGVIMLLGRYLLMGFQLVIA, and LLLISAMLIIGLLSYFPIIVL.

Belongs to the KdpA family. As to quaternary structure, the system is composed of three essential subunits: KdpA, KdpB and KdpC.

It localises to the cell membrane. Part of the high-affinity ATP-driven potassium transport (or Kdp) system, which catalyzes the hydrolysis of ATP coupled with the electrogenic transport of potassium into the cytoplasm. This subunit binds the extracellular potassium ions and delivers the ions to the membrane domain of KdpB through an intramembrane tunnel. In Thermoplasma volcanium (strain ATCC 51530 / DSM 4299 / JCM 9571 / NBRC 15438 / GSS1), this protein is Potassium-transporting ATPase potassium-binding subunit.